The primary structure comprises 84 residues: U8-theraphotoxin-Hhn1e (84 aa).

The N-terminal stretch at 1–21 (MKVVLLVCLVWMMAMMELVSC) is a signal peptide. Intrachain disulfides connect Cys23-Cys35, Cys29-Cys44, Cys34-Cys67, Cys54-Cys75, and Cys69-Cys81.

The protein belongs to the AVIT (prokineticin) family. As to expression, expressed by the venom gland.

It is found in the secreted. The polypeptide is U8-theraphotoxin-Hhn1e (Cyriopagopus hainanus (Chinese bird spider)).